We begin with the raw amino-acid sequence, 388 residues long: Putative [LysW]-aminoadipate semialdehyde/glutamate semialdehyde transaminase (388 aa).

Pyridoxal 5'-phosphate is bound by residues 100-101 (GT) and Phe127. A substrate-binding site is contributed by Arg130. 211–214 (DEIQ) contacts pyridoxal 5'-phosphate. At Lys240 the chain carries N6-(pyridoxal phosphate)lysine. Ser268 contributes to the substrate binding site. Thr269 is a pyridoxal 5'-phosphate binding site.

The protein belongs to the class-III pyridoxal-phosphate-dependent aminotransferase family. LysJ subfamily. In terms of assembly, homodimer. The cofactor is pyridoxal 5'-phosphate.

It localises to the cytoplasm. It catalyses the reaction [amino-group carrier protein]-C-terminal-gamma-(L-lysyl)-L-glutamate + 2-oxoglutarate = [amino-group carrier protein]-C-terminal-N-(1-carboxy-5-oxopentan-1-yl)-L-glutamine + L-glutamate. The enzyme catalyses [amino-group carrier protein]-C-terminal-gamma-(L-ornithyl)-L-glutamate + 2-oxoglutarate = [amino-group carrier protein]-C-terminal-gamma-(L-glutamyl-5-semialdehyde)-L-glutamate + L-glutamate. The protein operates within amino-acid biosynthesis; L-lysine biosynthesis via AAA pathway; L-lysine from L-alpha-aminoadipate (Thermus route): step 4/5. Its pathway is amino-acid biosynthesis; L-arginine biosynthesis. Functionally, involved in both the arginine and lysine biosynthetic pathways. This chain is Putative [LysW]-aminoadipate semialdehyde/glutamate semialdehyde transaminase, found in Aeropyrum pernix (strain ATCC 700893 / DSM 11879 / JCM 9820 / NBRC 100138 / K1).